The chain runs to 91 residues: Acylphosphatase (91 aa).

An Acylphosphatase-like domain is found at 3-91 (CLRAIVKGKV…ANYSDFRIKH (89 aa)). Active-site residues include Arg18 and Asn36.

It belongs to the acylphosphatase family.

It carries out the reaction an acyl phosphate + H2O = a carboxylate + phosphate + H(+). In Dehalococcoides mccartyi (strain CBDB1), this protein is Acylphosphatase (acyP).